A 996-amino-acid polypeptide reads, in one-letter code: Protein psiR (996 aa).

Positions 1–21 (MKKIILMLLLFSIFFILKSES) are cleaved as a signal peptide. N-linked (GlcNAc...) asparagine glycosylation is found at Asn-79, Asn-117, Asn-323, Asn-396, Asn-428, Asn-474, Asn-500, Asn-645, and Asn-779. Residues 105 to 250 (QSLSNPNIYS…YDECGVCEGD (146 aa)) form the PA14 domain.

This sequence belongs to the prespore-cell-inducing factor family.

It localises to the secreted. The polypeptide is Protein psiR (psiR) (Dictyostelium discoideum (Social amoeba)).